Here is a 164-residue protein sequence, read N- to C-terminus: Shikimate kinase (164 aa).

10-15 is an ATP binding site; sequence GVGKTT. Position 14 (T14) interacts with Mg(2+). Residues D28, R52, and G75 each coordinate substrate. Residue R116 coordinates ATP. Residue R134 coordinates substrate. R151 lines the ATP pocket.

This sequence belongs to the shikimate kinase family. Monomer. Mg(2+) is required as a cofactor.

It is found in the cytoplasm. It carries out the reaction shikimate + ATP = 3-phosphoshikimate + ADP + H(+). The protein operates within metabolic intermediate biosynthesis; chorismate biosynthesis; chorismate from D-erythrose 4-phosphate and phosphoenolpyruvate: step 5/7. Catalyzes the specific phosphorylation of the 3-hydroxyl group of shikimic acid using ATP as a cosubstrate. The protein is Shikimate kinase of Streptococcus equi subsp. zooepidemicus (strain MGCS10565).